The sequence spans 355 residues: MKIRIDIPHHPYDIQIEKGCMAQAGQWLRELWQPQKVVIVTDNHVASLYAEKVKLSLEDAGFQVAVFDFLEGEERKNLTTVQKVYEFLVKQGLTRSDGIVALGGGVVGDLAGFVASTYMRGIHFVQIPTSLTAQVDSSIGGKTGVNTPFAKNMVGTFAQPDGVLIDPLVLETLGKRELIEGMGEVIKYGLIEDPELWALLTGLNGSVESILEHAETLIEHSCQVKRKMVVEDELDNGIRLYLNFGHTIGHAIEATAGYGKVMHGEAVAMGMVQISKIAEEKGLMPAGITQSITEMCQKFGLPVDYENWEVDKLYQALTHDKKARGNTLKLVLVPELGSATIHPVSLEEMKDYLVK.

NAD(+) contacts are provided by residues 71-76 (EGEERK), 105-109 (GVVGD), 129-130 (TS), lysine 142, and lysine 151. Glutamate 184, histidine 246, and histidine 263 together coordinate Zn(2+).

The protein belongs to the sugar phosphate cyclases superfamily. Dehydroquinate synthase family. It depends on NAD(+) as a cofactor. The cofactor is Co(2+). Requires Zn(2+) as cofactor.

The protein localises to the cytoplasm. It carries out the reaction 7-phospho-2-dehydro-3-deoxy-D-arabino-heptonate = 3-dehydroquinate + phosphate. It functions in the pathway metabolic intermediate biosynthesis; chorismate biosynthesis; chorismate from D-erythrose 4-phosphate and phosphoenolpyruvate: step 2/7. In terms of biological role, catalyzes the conversion of 3-deoxy-D-arabino-heptulosonate 7-phosphate (DAHP) to dehydroquinate (DHQ). The polypeptide is 3-dehydroquinate synthase (Streptococcus pneumoniae (strain ATCC BAA-255 / R6)).